The primary structure comprises 198 residues: tRNA (pseudouridine(54)-N(1))-methyltransferase (198 aa).

Residues leucine 130, glycine 153, 176–181 (LSPLEL), and cysteine 186 contribute to the S-adenosyl-L-methionine site.

Belongs to the methyltransferase superfamily. TrmY family. In terms of assembly, homodimer.

Its subcellular location is the cytoplasm. It carries out the reaction pseudouridine(54) in tRNA + S-adenosyl-L-methionine = N(1)-methylpseudouridine(54) in tRNA + S-adenosyl-L-homocysteine + H(+). In terms of biological role, specifically catalyzes the N1-methylation of pseudouridine at position 54 (Psi54) in tRNAs. This chain is tRNA (pseudouridine(54)-N(1))-methyltransferase, found in Methanococcus vannielii (strain ATCC 35089 / DSM 1224 / JCM 13029 / OCM 148 / SB).